The chain runs to 1168 residues: Protein VARIATION IN COMPOUND TRIGGERED ROOT growth response (1168 aa).

The TIR domain occupies 10–171 (WVYDVFLSFS…EIANDVLAKL (162 aa)). Glu-85 is an active-site residue. The NB-ARC domain maps to 187–452 (EDHIANMSVL…ACLFNHVKVR (266 aa)). LRR repeat units lie at residues 539–562 (TSKVSEFCVHENAFKGMGNLLFLD), 606–629 (LRNLVKLEMHDSKLEKLWEGAMSF), 631–653 (CLKELDMWASKYLKEIPDLSKAT), 676–699 (LNKLLELNMEYCGELETLPTGFNL), 701–720 (SLDYLNFNECWKLRTFPEFA), 721–744 (TNISNLILAETSIEEYPSNLYFKN), 795–820 (LNNLERLDICYCRNLESLPTGINLES), 839–865 (STNIKYLDLDQTGIEEVPWQIENFFNL), 873–896 (CRELKCVSLNIFKLKHLGEVSFSN), and 1065–1089 (NVPLSQLNYDHVDINIHITSGDWRS).

Belongs to the disease resistance NB-LRR family. Part of a nuclear protein complex made of VICTR, PAD4 and EDS1. Interacts (via TIR domain) with PAD4 and EDS1.

The protein localises to the cytoplasm. It is found in the nucleus. The enzyme catalyses NAD(+) + H2O = ADP-D-ribose + nicotinamide + H(+). Functionally, disease resistance protein of the TIR-NB-LRR-type. Part of the RPS6 locus that contains a cluster of several paralogous disease resistance (R) genes. Resistance proteins guard the plant against pathogens that contain an appropriate avirulence protein via an indirect interaction with this avirulence protein. That triggers a defense system including the hypersensitive response, which restricts the pathogen growth. Required for [5-(3,4-dichlorophenyl)furan-2-yl]-piperidine-1-ylmethanethione-(DFPM-) induced root growth arrest due to reduced number of meristem cells in the division zone of the primary root and inhibition of abscisic acid- (ABA-) induced stomatal closing. The sequence is that of Protein VARIATION IN COMPOUND TRIGGERED ROOT growth response (VICTR) from Arabidopsis thaliana (Mouse-ear cress).